Consider the following 187-residue polypeptide: Adenine phosphoribosyltransferase (187 aa).

This sequence belongs to the purine/pyrimidine phosphoribosyltransferase family. In terms of assembly, homodimer.

Its subcellular location is the cytoplasm. The enzyme catalyses AMP + diphosphate = 5-phospho-alpha-D-ribose 1-diphosphate + adenine. The protein operates within purine metabolism; AMP biosynthesis via salvage pathway; AMP from adenine: step 1/1. Its function is as follows. Catalyzes a salvage reaction resulting in the formation of AMP, that is energically less costly than de novo synthesis. This chain is Adenine phosphoribosyltransferase, found in Paracoccus denitrificans (strain Pd 1222).